The primary structure comprises 1610 residues: Protein TASOR (1610 aa).

Residues 1–96 (MATAAETEAP…PERPFRRSFQ (96 aa)) are disordered. Ala2 carries the N-acetylalanine modification. Positions 41 to 51 (NGGGDGGGGAG) are enriched in gly residues. The span at 52 to 61 (PEETAAAEAA) shows a compositional bias: low complexity. Position 339 is a phosphoserine (Ser339). Lys581 is covalently cross-linked (Glycyl lysine isopeptide (Lys-Gly) (interchain with G-Cter in SUMO2)). Phosphoserine is present on residues Ser628, Ser631, and Ser668. 2 disordered regions span residues 631-671 (SDYE…SLDY) and 687-710 (KKNV…RKLE). Basic and acidic residues-rich tracts occupy residues 652-671 (NSRD…SLDY) and 697-710 (EDTK…RKLE). Residue Ser793 is modified to Phosphoserine. Glycyl lysine isopeptide (Lys-Gly) (interchain with G-Cter in SUMO2) cross-links involve residues Lys816 and Lys825. Ser836 carries the phosphoserine modification. Residue Lys866 forms a Glycyl lysine isopeptide (Lys-Gly) (interchain with G-Cter in SUMO2) linkage. The tract at residues 915 to 941 (TGGNAGSPEDQHGKHGEKQTPDTLKGT) is disordered. A phosphoserine mark is found at Ser921 and Lys928. The span at 923 to 934 (EDQHGKHGEKQT) shows a compositional bias: basic and acidic residues. The residue at position 1004 (Thr1004) is a Phosphothreonine. Phosphoserine occurs at positions 1059 and 1508.

The protein belongs to the TASOR family. In terms of assembly, component of the HUSH complex; at least composed of TASOR, PPHLN1 and MPHOSPH8. Interacts with MORC2; the interaction associateS MORC2 with the HUSH complex which recruits MORC2 to heterochromatic loci. Interacts with ZNF638; leading to recruitment of the HUSH complex to unintegrated retroviral DNA. Interacts with INPP5A, EML1, SV1L, GPSM2, ITGB3BP, CNTN1, ETFA, PSMD8, S100A10, MPHOSPH8, TMEM100, ALB, PARPBP, HCFC2, NCBP1 and SETDB1. Present in skin, brain and testis (at protein level). Ubiquitously expressed at low levels in the majority of the organs, expressed at higher levels in kidneys, spleen, thymus, seminal vesicles, uterus, and ovaries and its expression is almost six times higher in male tissues than in females. Highly expressed in seminiferous tubules with a strong signal in Sertoli cells, spermatogonia, and spermatocytes.

It is found in the nucleus. Its subcellular location is the chromosome. Component of the HUSH complex, a multiprotein complex that mediates epigenetic repression. The HUSH complex is recruited to genomic loci rich in H3K9me3 and is required to maintain transcriptional silencing by promoting recruitment of SETDB1, a histone methyltransferase that mediates further deposition of H3K9me3, as well as MORC2. Also represses L1 retrotransposons in collaboration with MORC2 and, probably, SETDB1, the silencing is dependent of repressive epigenetic modifications, such as H3K9me3 mark. Silencing events often occur within introns of transcriptionally active genes, and lead to the down-regulation of host gene expression. The HUSH complex is also involved in the silencing of unintegrated retroviral DNA by being recruited by ZNF638: some part of the retroviral DNA formed immediately after infection remains unintegrated in the host genome and is transcriptionally repressed. Plays a crucial role in early embryonic development. Involved in the organization of spindle poles and spindle apparatus assembly during zygotic division. Plays an important role in maintaining epiblast fitness or potency. This Mus musculus (Mouse) protein is Protein TASOR.